A 284-amino-acid chain; its full sequence is Release factor glutamine methyltransferase (284 aa).

S-adenosyl-L-methionine is bound by residues glycine 125 to glycine 129, glutamate 148, and asparagine 190. Substrate is bound at residue asparagine 190–tyrosine 193.

This sequence belongs to the protein N5-glutamine methyltransferase family. PrmC subfamily.

The catalysed reaction is L-glutaminyl-[peptide chain release factor] + S-adenosyl-L-methionine = N(5)-methyl-L-glutaminyl-[peptide chain release factor] + S-adenosyl-L-homocysteine + H(+). Functionally, methylates the class 1 translation termination release factors RF1/PrfA and RF2/PrfB on the glutamine residue of the universally conserved GGQ motif. In Geobacter sulfurreducens (strain ATCC 51573 / DSM 12127 / PCA), this protein is Release factor glutamine methyltransferase.